The primary structure comprises 150 residues: Transcriptional repressor NrdR (150 aa).

A zinc finger spans residues 3-34 (CPFCNASDTKVVDTRASEDDKIVRRRRECISC). The ATP-cone domain occupies 49-139 (LTVVKKDKNR…VYREFTDVKS (91 aa)).

Belongs to the NrdR family. Zn(2+) is required as a cofactor.

Functionally, negatively regulates transcription of bacterial ribonucleotide reductase nrd genes and operons by binding to NrdR-boxes. In Finegoldia magna (strain ATCC 29328 / DSM 20472 / WAL 2508) (Peptostreptococcus magnus), this protein is Transcriptional repressor NrdR.